We begin with the raw amino-acid sequence, 264 residues long: Indole-3-glycerol phosphate synthase (264 aa).

This sequence belongs to the TrpC family.

It catalyses the reaction 1-(2-carboxyphenylamino)-1-deoxy-D-ribulose 5-phosphate + H(+) = (1S,2R)-1-C-(indol-3-yl)glycerol 3-phosphate + CO2 + H2O. It participates in amino-acid biosynthesis; L-tryptophan biosynthesis; L-tryptophan from chorismate: step 4/5. This Stenotrophomonas maltophilia (strain K279a) protein is Indole-3-glycerol phosphate synthase.